The following is a 38-amino-acid chain: DSHEERHHGRHGHHKYGRKFHEKHHSHRGYRSNYLYDN.

The tract at residues Asp-1 to Asn-38 is disordered. Ser-2 carries the post-translational modification Phosphoserine. Over residues His-8–Tyr-30 the composition is skewed to basic residues.

It belongs to the histatin/statherin family.

The protein resides in the secreted. In terms of biological role, histatins (Hsts) are cationic and histidine-rich secreted peptides mainly synthesized by saliva glands of humans and higher primates. Hsts are considered to be major precursors of the protective proteinaceous structure on tooth surfaces (enamel pellicle). This Macaca fascicularis (Crab-eating macaque) protein is Histatin-1 (HTN1).